Here is a 118-residue protein sequence, read N- to C-terminus: MITKPDKNKIRQKRHRRVRGKLSGTADRPRLNVFRSNTGIYAQVIDDVAGVTLASASTLDKEVSKGTKTEQAVVVGKLVAERAVAKGISEVVFDRGGYLYHGRVKALADAARENGLKF.

The interval 1-24 is disordered; the sequence is MITKPDKNKIRQKRHRRVRGKLSG. The segment covering 10–20 has biased composition (basic residues); sequence IRQKRHRRVRG.

Belongs to the universal ribosomal protein uL18 family. Part of the 50S ribosomal subunit; part of the 5S rRNA/L5/L18/L25 subcomplex. Contacts the 5S and 23S rRNAs.

In terms of biological role, this is one of the proteins that bind and probably mediate the attachment of the 5S RNA into the large ribosomal subunit, where it forms part of the central protuberance. In Streptococcus sanguinis (strain SK36), this protein is Large ribosomal subunit protein uL18.